A 351-amino-acid chain; its full sequence is Phenylacetaldoxime dehydratase (351 aa).

The protein belongs to the heme-containing dehydratase family. As to quaternary structure, monomer. Heme b is required as a cofactor.

The enzyme catalyses (Z)-phenylacetaldehyde oxime = phenylacetonitrile + H2O. In terms of biological role, catalyzes the stoichiometric dehydration of Z-phenylacetaldoxime to phenylacetonitrile. Prefers the Z-form of phenylacetaldoxime over its E-isomer. The polypeptide is Phenylacetaldoxime dehydratase (Bacillus sp. (strain OxB-1)).